The chain runs to 471 residues: Glutamate--tRNA ligase (471 aa).

Positions 9–19 (PSPTGFLHVGG) match the 'HIGH' region motif. 4 residues coordinate Zn(2+): cysteine 98, cysteine 100, cysteine 125, and aspartate 127. A 'KMSKS' region motif is present at residues 237–241 (KLSKR). Lysine 240 serves as a coordination point for ATP.

This sequence belongs to the class-I aminoacyl-tRNA synthetase family. Glutamate--tRNA ligase type 1 subfamily. Monomer. It depends on Zn(2+) as a cofactor.

The protein localises to the cytoplasm. It carries out the reaction tRNA(Glu) + L-glutamate + ATP = L-glutamyl-tRNA(Glu) + AMP + diphosphate. In terms of biological role, catalyzes the attachment of glutamate to tRNA(Glu) in a two-step reaction: glutamate is first activated by ATP to form Glu-AMP and then transferred to the acceptor end of tRNA(Glu). The sequence is that of Glutamate--tRNA ligase from Aeromonas hydrophila subsp. hydrophila (strain ATCC 7966 / DSM 30187 / BCRC 13018 / CCUG 14551 / JCM 1027 / KCTC 2358 / NCIMB 9240 / NCTC 8049).